The following is a 445-amino-acid chain: Ribosomal protein uS12 methylthiotransferase RimO (445 aa).

In terms of domain architecture, MTTase N-terminal spans 4–119; sequence IKVALVSLGC…LLESIKVFLK (116 aa). [4Fe-4S] cluster contacts are provided by Cys-13, Cys-48, Cys-82, Cys-156, Cys-160, and Cys-163. The Radical SAM core domain maps to 142 to 372; that stretch reads TTPTYTAYVR…MILQQSISKD (231 aa). The TRAM domain maps to 375-441; that stretch reads KEKIGKTYEV…EYDLIGVVYN (67 aa).

Belongs to the methylthiotransferase family. RimO subfamily. [4Fe-4S] cluster is required as a cofactor.

It is found in the cytoplasm. The enzyme catalyses L-aspartate(89)-[ribosomal protein uS12]-hydrogen + (sulfur carrier)-SH + AH2 + 2 S-adenosyl-L-methionine = 3-methylsulfanyl-L-aspartate(89)-[ribosomal protein uS12]-hydrogen + (sulfur carrier)-H + 5'-deoxyadenosine + L-methionine + A + S-adenosyl-L-homocysteine + 2 H(+). Functionally, catalyzes the methylthiolation of an aspartic acid residue of ribosomal protein uS12. The chain is Ribosomal protein uS12 methylthiotransferase RimO from Clostridium botulinum (strain ATCC 19397 / Type A).